Consider the following 215-residue polypeptide: Cytochrome b6 (215 aa).

The helical transmembrane segment at 32–52 (IFYCLGGITLTCFLVQVATGF) threads the bilayer. Residue Cys35 participates in heme c binding. His86 and His100 together coordinate heme b. Transmembrane regions (helical) follow at residues 90–110 (ASMMVLMMILHVFRVYLTGGF), 116–136 (LTWVTGVVLAVLTASFGVTGY), and 186–206 (LHTFVLPLLTAVFMLMHFLMI). The heme b site is built by His187 and His202.

It belongs to the cytochrome b family. PetB subfamily. The 4 large subunits of the cytochrome b6-f complex are cytochrome b6, subunit IV (17 kDa polypeptide, PetD), cytochrome f and the Rieske protein, while the 4 small subunits are PetG, PetL, PetM and PetN. The complex functions as a dimer. Heme b serves as cofactor. Requires heme c as cofactor.

It localises to the plastid. It is found in the chloroplast thylakoid membrane. In terms of biological role, component of the cytochrome b6-f complex, which mediates electron transfer between photosystem II (PSII) and photosystem I (PSI), cyclic electron flow around PSI, and state transitions. The protein is Cytochrome b6 of Morus indica (Mulberry).